The sequence spans 429 residues: 4-hydroxybutyrate coenzyme A transferase (429 aa).

215-219 (GIGAI) serves as a coordination point for CoA. E238 serves as the catalytic 5-glutamyl coenzyme A thioester intermediate. Residue G336 coordinates CoA.

This sequence belongs to the acetyl-CoA hydrolase/transferase family.

This chain is 4-hydroxybutyrate coenzyme A transferase (cat2), found in Clostridium kluyveri (strain ATCC 8527 / DSM 555 / NBRC 12016 / NCIMB 10680 / K1).